The sequence spans 272 residues: uncharacterized protein (272 aa).

Residues aspartate 71 and glutamate 163 contribute to the active site.

This sequence belongs to the glycosyl hydrolase 25 family.

This is an uncharacterized protein from Escherichia coli (strain K12).